A 741-amino-acid polypeptide reads, in one-letter code: Ethylene receptor 2 (741 aa).

Transmembrane regions (helical) follow at residues 23–43 (ISDFFIAIAYFSIPLELIYFV), 53–73 (WVLVQFGAFIVLCGATHLINL), and 92–112 (IMTAVVSCATALMLVHIIPDL). 2 residues coordinate Cu cation: cysteine 65 and histidine 69. Residues 158 to 307 (DRHTILKTTL…VVADQVAVAL (150 aa)) enclose the GAF domain. A Histidine kinase domain is found at 350 to 589 (VMNHEMRTPM…TFVVKLGIPE (240 aa)). Histidine 353 is subject to Phosphohistidine; by autocatalysis. A Response regulatory domain is found at 615 to 732 (KVLLLDDNGV…KMRNVLSNLL (118 aa)). Aspartate 663 carries the 4-aspartylphosphate modification.

This sequence belongs to the ethylene receptor family. In terms of assembly, homodimer; disulfide-linked. It depends on Cu cation as a cofactor. Post-translationally, activation probably requires a transfer of a phosphate group between a His in the transmitter domain and an Asp of the receiver domain.

It is found in the endoplasmic reticulum membrane. The catalysed reaction is ATP + protein L-histidine = ADP + protein N-phospho-L-histidine.. May act early in the ethylene signal transduction pathway, possibly as an ethylene receptor, or as a regulator of the pathway. The sequence is that of Ethylene receptor 2 (ETR2) from Pelargonium hortorum (Common geranium).